The sequence spans 517 residues: Protein AGENET DOMAIN (AGD)-CONTAINING P1 (517 aa).

The disordered stretch occupies residues 1–35 (MLRPRRSLGVSSPAKQRKKAAPKNSMATRANRKRL). Plant Agenet, chromatin-binding stretches follow at residues 37 to 111 (SYLK…PPMS) and 117 to 173 (KKIV…EWVD). The disordered stretch occupies residues 177–202 (KPPLEETEEEEDESEEDKLDDSEDEE). Positions 181-202 (EETEEEEDESEEDKLDDSEDEE) are enriched in acidic residues. Plant Agenet, chromatin-binding stretches follow at residues 219 to 287 (QMFS…PRDE), 289 to 345 (IDFA…DWVD), 378 to 446 (QAFS…LESV), and 449 to 505 (SPFE…EWID).

As to expression, expressed ubiquitously during vegetative stage, in meristems (e.g. root tips and shoot apical meristem), and in ovules and young seeds during reproductive stage.

The protein resides in the nucleus. Heterochromatin-binding protein that preferentially occupies long transposons and specifically recognizes the histone H3 'Lys-9' methylation (H3K9me) marks, with a stronger affinity for dimethylated H3K9 (H3K9me2). Required for transcriptional silencing, non-CG DNA methylation (e.g. CHG and CHH regions), and H3K9 dimethylation (H3K9me2) at some loci. Mediates heterochromatin phase separation and chromocenter formation. The chain is Protein AGENET DOMAIN (AGD)-CONTAINING P1 from Arabidopsis thaliana (Mouse-ear cress).